A 94-amino-acid chain; its full sequence is MTKSELIERLAGQQSHISAKTVEDAVKEILDHMAITLADGERIEVRGFGSFSLHYRAPRVGRNPKTGDKVELEGKYVPHFKPGKELRDRVNIYD.

It belongs to the bacterial histone-like protein family. In terms of assembly, heterodimer of an alpha and a beta chain.

In terms of biological role, this protein is one of the two subunits of integration host factor, a specific DNA-binding protein that functions in genetic recombination as well as in transcriptional and translational control. In Photorhabdus laumondii subsp. laumondii (strain DSM 15139 / CIP 105565 / TT01) (Photorhabdus luminescens subsp. laumondii), this protein is Integration host factor subunit beta.